A 392-amino-acid polypeptide reads, in one-letter code: Tryptophan 2,3-dioxygenase (392 aa).

Substrate contacts are provided by residues 57–61 (FIVTH) and Arg128. His313 is a heme binding site. Thr328 is a binding site for substrate.

This sequence belongs to the tryptophan 2,3-dioxygenase family. Homotetramer. Dimer of dimers. Requires heme as cofactor.

It carries out the reaction L-tryptophan + O2 = N-formyl-L-kynurenine. The protein operates within amino-acid degradation; L-tryptophan degradation via kynurenine pathway; L-kynurenine from L-tryptophan: step 1/2. It functions in the pathway pigment biosynthesis; ommochrome biosynthesis. In terms of biological role, heme-dependent dioxygenase that catalyzes the oxidative cleavage of the L-tryptophan (L-Trp) pyrrole ring and converts L-tryptophan to N-formyl-L-kynurenine. Catalyzes the oxidative cleavage of the indole moiety. The sequence is that of Tryptophan 2,3-dioxygenase from Anopheles gambiae (African malaria mosquito).